We begin with the raw amino-acid sequence, 447 residues long: tRNA-2-methylthio-N(6)-dimethylallyladenosine synthase (447 aa).

One can recognise an MTTase N-terminal domain in the interval 3-120 (KKLYIETHGC…LPEMIDAART (118 aa)). 6 residues coordinate [4Fe-4S] cluster: Cys12, Cys49, Cys83, Cys157, Cys161, and Cys164. Positions 143–375 (RVDGPSAFVS…QHRINQYGFE (233 aa)) constitute a Radical SAM core domain. The 65-residue stretch at 378–442 (RRMVGTVQRI…PHSLRGTLLD (65 aa)) folds into the TRAM domain.

This sequence belongs to the methylthiotransferase family. MiaB subfamily. As to quaternary structure, monomer. [4Fe-4S] cluster serves as cofactor.

Its subcellular location is the cytoplasm. It carries out the reaction N(6)-dimethylallyladenosine(37) in tRNA + (sulfur carrier)-SH + AH2 + 2 S-adenosyl-L-methionine = 2-methylsulfanyl-N(6)-dimethylallyladenosine(37) in tRNA + (sulfur carrier)-H + 5'-deoxyadenosine + L-methionine + A + S-adenosyl-L-homocysteine + 2 H(+). Its function is as follows. Catalyzes the methylthiolation of N6-(dimethylallyl)adenosine (i(6)A), leading to the formation of 2-methylthio-N6-(dimethylallyl)adenosine (ms(2)i(6)A) at position 37 in tRNAs that read codons beginning with uridine. This Ectopseudomonas mendocina (strain ymp) (Pseudomonas mendocina) protein is tRNA-2-methylthio-N(6)-dimethylallyladenosine synthase.